The sequence spans 307 residues: Porphobilinogen deaminase (307 aa).

The residue at position 241 (Cys241) is an S-(dipyrrolylmethanemethyl)cysteine.

The protein belongs to the HMBS family. Monomer. The cofactor is dipyrromethane.

It carries out the reaction 4 porphobilinogen + H2O = hydroxymethylbilane + 4 NH4(+). It participates in porphyrin-containing compound metabolism; protoporphyrin-IX biosynthesis; coproporphyrinogen-III from 5-aminolevulinate: step 2/4. In terms of biological role, tetrapolymerization of the monopyrrole PBG into the hydroxymethylbilane pre-uroporphyrinogen in several discrete steps. The chain is Porphobilinogen deaminase from Macrococcus caseolyticus (strain JCSC5402) (Macrococcoides caseolyticum).